A 353-amino-acid polypeptide reads, in one-letter code: UPF0283 membrane protein YcjF (353 aa).

Residues 16–35 form a disordered region; that stretch reads KEESTSAFKAQQTFSEAESR. Over residues 20-31 the composition is skewed to polar residues; it reads TSAFKAQQTFSE. 3 helical membrane passes run 70 to 90, 100 to 120, and 213 to 233; these read MVMG…VQWT, VALG…GSVV, and ESTL…FIAW.

Belongs to the UPF0283 family.

The protein localises to the cell inner membrane. This chain is UPF0283 membrane protein YcjF, found in Salmonella heidelberg (strain SL476).